The following is a 345-amino-acid chain: N-acetyl-gamma-glutamyl-phosphate reductase (345 aa).

The active site involves Cys-149.

The protein belongs to the NAGSA dehydrogenase family. Type 1 subfamily.

The protein resides in the cytoplasm. It carries out the reaction N-acetyl-L-glutamate 5-semialdehyde + phosphate + NADP(+) = N-acetyl-L-glutamyl 5-phosphate + NADPH + H(+). The protein operates within amino-acid biosynthesis; L-arginine biosynthesis; N(2)-acetyl-L-ornithine from L-glutamate: step 3/4. In terms of biological role, catalyzes the NADPH-dependent reduction of N-acetyl-5-glutamyl phosphate to yield N-acetyl-L-glutamate 5-semialdehyde. The chain is N-acetyl-gamma-glutamyl-phosphate reductase from Bacillus anthracis.